We begin with the raw amino-acid sequence, 179 residues long: Large ribosomal subunit protein uL5 (179 aa).

Belongs to the universal ribosomal protein uL5 family. As to quaternary structure, part of the 50S ribosomal subunit; part of the 5S rRNA/L5/L18/L25 subcomplex. Contacts the 5S rRNA and the P site tRNA. Forms a bridge to the 30S subunit in the 70S ribosome.

In terms of biological role, this is one of the proteins that bind and probably mediate the attachment of the 5S RNA into the large ribosomal subunit, where it forms part of the central protuberance. In the 70S ribosome it contacts protein S13 of the 30S subunit (bridge B1b), connecting the 2 subunits; this bridge is implicated in subunit movement. Contacts the P site tRNA; the 5S rRNA and some of its associated proteins might help stabilize positioning of ribosome-bound tRNAs. This Geobacillus thermodenitrificans (strain NG80-2) protein is Large ribosomal subunit protein uL5.